A 132-amino-acid polypeptide reads, in one-letter code: Fluoride-specific ion channel FluC 1 (132 aa).

The next 4 membrane-spanning stretches (helical) occupy residues 11 to 31, 37 to 57, 70 to 92, and 105 to 125; these read AVFA…ALAI, WPWP…YFTT, RPLL…VETI, and AYSV…TVLV. Positions 79 and 82 each coordinate Na(+).

It belongs to the fluoride channel Fluc/FEX (TC 1.A.43) family.

The protein resides in the cell membrane. The catalysed reaction is fluoride(in) = fluoride(out). Its activity is regulated as follows. Na(+) is not transported, but it plays an essential structural role and its presence is essential for fluoride channel function. Its function is as follows. Fluoride-specific ion channel. Important for reducing fluoride concentration in the cell, thus reducing its toxicity. The chain is Fluoride-specific ion channel FluC 1 from Mycobacterium bovis (strain ATCC BAA-935 / AF2122/97).